A 363-amino-acid chain; its full sequence is MKESVIRKLEGLLERNEEVLALLGDASVIADQDRFRALSKEYSQLEEVVAGFKAYQQAQADLESAKEMLEEDDAEMREMAQEEIKAAKVELERLEAELQILLLPKDPNDDTNAFIEIRAGAGGDEAAIFAGDLFRMYSRYAEANRWQLEIMSSNEGEHGGFKEIIVKVSGEGAYGKLKFESGGHRVQRVPETESQGRVHTSAVTVVVMHEVPEAEAISINPADLKVDTFRSSGAGGQHVNKTDSAIRITHIPTGIVVECQDQRSQHKNRAQAMSVLAARIQAVEDEKRRSAEESTRRSLVASGDRSERVRTYNFPQGRVSEHRINLTLYRLNEVMEGDLDAILGPLMQEHQADLLAALADEQG.

Q237 is subject to N5-methylglutamine. Over residues E284 to R296 the composition is skewed to basic and acidic residues. Positions E284 to S306 are disordered.

It belongs to the prokaryotic/mitochondrial release factor family. Post-translationally, methylated by PrmC. Methylation increases the termination efficiency of RF1.

It is found in the cytoplasm. Its function is as follows. Peptide chain release factor 1 directs the termination of translation in response to the peptide chain termination codons UAG and UAA. This is Peptide chain release factor 1 from Shewanella oneidensis (strain ATCC 700550 / JCM 31522 / CIP 106686 / LMG 19005 / NCIMB 14063 / MR-1).